The primary structure comprises 283 residues: Lipoyl synthase (283 aa).

7 residues coordinate [4Fe-4S] cluster: C35, C40, C46, C61, C65, C68, and S273. Positions 47-262 constitute a Radical SAM core domain; the sequence is FRSRQATFLI…RERALAMGFK (216 aa).

The protein belongs to the radical SAM superfamily. Lipoyl synthase family. Requires [4Fe-4S] cluster as cofactor.

The protein resides in the cytoplasm. It catalyses the reaction [[Fe-S] cluster scaffold protein carrying a second [4Fe-4S](2+) cluster] + N(6)-octanoyl-L-lysyl-[protein] + 2 oxidized [2Fe-2S]-[ferredoxin] + 2 S-adenosyl-L-methionine + 4 H(+) = [[Fe-S] cluster scaffold protein] + N(6)-[(R)-dihydrolipoyl]-L-lysyl-[protein] + 4 Fe(3+) + 2 hydrogen sulfide + 2 5'-deoxyadenosine + 2 L-methionine + 2 reduced [2Fe-2S]-[ferredoxin]. The protein operates within protein modification; protein lipoylation via endogenous pathway; protein N(6)-(lipoyl)lysine from octanoyl-[acyl-carrier-protein]: step 2/2. Its function is as follows. Catalyzes the radical-mediated insertion of two sulfur atoms into the C-6 and C-8 positions of the octanoyl moiety bound to the lipoyl domains of lipoate-dependent enzymes, thereby converting the octanoylated domains into lipoylated derivatives. This is Lipoyl synthase from Geotalea uraniireducens (strain Rf4) (Geobacter uraniireducens).